Reading from the N-terminus, the 1406-residue chain is Carboxypeptidase D (1406 aa).

The N-terminal stretch at 1–25 (MPTLGLLFASIGIAVLAMGVPHCRG) is a signal peptide. The Extracellular segment spans residues 26–1312 (YTIKEDESFL…VNEHVFGLPR (1287 aa)). 2 consecutive Peptidase M14 domains span residues 39–335 (HYAS…LRQA) and 455–760 (EHHN…IEQV). Residues histidine 101 and glutamate 104 each contribute to the Zn(2+) site. N-linked (GlcNAc...) asparagine glycosylation is present at asparagine 133. Intrachain disulfides connect cysteine 156-cysteine 309, cysteine 236-cysteine 237, and cysteine 268-cysteine 308. Zn(2+) is bound at residue histidine 217. Residue asparagine 269 is glycosylated (N-linked (GlcNAc...) asparagine). The active-site Proton donor/acceptor is the glutamate 305. A glycan (N-linked (GlcNAc...) asparagine) is linked at asparagine 458. Zn(2+) contacts are provided by histidine 517 and glutamate 520. N-linked (GlcNAc...) asparagine glycosylation is found at asparagine 549 and asparagine 612. Histidine 626 is a binding site for Zn(2+). Asparagine 652 is a glycosylation site (N-linked (GlcNAc...) asparagine). The active-site Proton donor/acceptor is the glutamate 730. 5 N-linked (GlcNAc...) asparagine glycosylation sites follow: asparagine 787, asparagine 808, asparagine 981, asparagine 1152, and asparagine 1251. The Peptidase M14 3 domain occupies 863 to 1121 (RYHTNPQVRA…DKIKNFLALV (259 aa)). A helical transmembrane segment spans residues 1313-1333 (FLFILCASVLIIVGVIVCVLC). At 1334–1406 (AQFWFYRRHR…TNYSFIIQAA (73 aa)) the chain is on the cytoplasmic side. Positions 1343–1345 (RGD) match the Cell attachment site motif. At serine 1380 the chain carries Phosphoserine.

Belongs to the peptidase M14 family. As to quaternary structure, monomer. Zn(2+) is required as a cofactor. As to expression, expressed in the central nervous system (CNS) of adults and larvae. In the adult brain, increased levels of expression in the mushroom body (MB) and neurosecretory cells.

Its subcellular location is the membrane. The protein localises to the cytoplasm. It localises to the perinuclear region. The protein resides in the golgi apparatus. It is found in the trans-Golgi network. Its subcellular location is the secreted. The catalysed reaction is Releases C-terminal Arg and Lys from polypeptides.. Its activity is regulated as follows. Inhibited by 2-guanidinoethylmercaptosuccinic acid (GEMSA). Functionally, metallocarboxypeptidase that catalyzes the release of C-terminal arginine or lysine residues from peptides and proteins. Functionally important for processing a broad range of proteins including growth factors, peptide hormones (such as Akh) and neuropeptides. Consequently, it is involved in a wide range of processes including viability, memory formation, locomotive activity, wing formation, and peptide-regulated behaviors such as starvation-induced hyperactivity, appetitive gustatory preference, and cold and ethanol sensitivity. Key enzyme in neuropeptide processing. Involved in regulation of memory formation, possibly via the insulin pathway in neurosecretory cells. The sequence is that of Carboxypeptidase D from Drosophila melanogaster (Fruit fly).